A 138-amino-acid polypeptide reads, in one-letter code: Centromere protein S (138 aa).

At Met-1 the chain carries N-acetylmethionine. Residues 112 to 138 are disordered; that stretch reads AKKKKKLEDENRNSVESAEAGVEESEN.

The protein belongs to the TAF9 family. CENP-S/MHF1 subfamily. In terms of assembly, heterodimer with CENPX, sometimes called MHF; this interaction stabilizes both partners. MHF heterodimers can assemble to form tetrameric structures. MHF also coassemble with CENPT-CENPW heterodimers at centromeres to form the tetrameric CENP-T-W-S-X complex. Forms a discrete complex with FANCM and CENPX, called FANCM-MHF; this interaction, probably mediated by direct binding between CENPS and FANCM, leads to synergistic activation of double-stranded DNA binding and strongly stimulates FANCM-mediated DNA remodeling. Recruited by FANCM to the Fanconi anemia (FA) core complex, which consists of CENPS, CENPX, FANCA, FANCB, FANCC, FANCE, FANCF, FANCG, FANCL, FANCM, FAAP24 and FAAP100. The FA core complex associates with Bloom syndrome (BLM) complex, which consists of at least BLM, DNA topoisomerase 3-alpha (TOP3A), RMI1/BLAP75, RPA1/RPA70 and RPA2/RPA32. The super complex between FA and BLM is called BRAFT. Component of the CENPA-CAD complex, composed of CENPI, CENPK, CENPL, CENPO, CENPP, CENPQ, CENPR and CENPS. The CENPA-CAD complex is probably recruited on centromeres by the CENPA-NAC complex, at least composed of CENPA, CENPC, CENPH, CENPM, CENPN, CENPT and CENPU.

The protein localises to the nucleus. It localises to the chromosome. The protein resides in the centromere. Its subcellular location is the kinetochore. Its function is as follows. DNA-binding component of the Fanconi anemia (FA) core complex. Required for the normal activation of the FA pathway, leading to monoubiquitination of the FANCI-FANCD2 complex in response to DNA damage, cellular resistance to DNA cross-linking drugs, and prevention of chromosomal breakage. In complex with CENPX (MHF heterodimer), crucial cofactor for FANCM in both binding and ATP-dependent remodeling of DNA. Stabilizes FANCM. In complex with CENPX and FANCM (but not other FANC proteins), rapidly recruited to blocked forks and promotes gene conversion at blocked replication forks. In complex with CENPT, CENPW and CENPX (CENP-T-W-S-X heterotetramer), involved in the formation of a functional kinetochore outer plate, which is essential for kinetochore-microtubule attachment and faithful mitotic progression. As a component of MHF and CENP-T-W-S-X complexes, binds DNA and bends it to form a nucleosome-like structure. DNA-binding function is fulfilled in the presence of CENPX, with the following preference for DNA substates: Holliday junction &gt; double-stranded &gt; splay arm &gt; single-stranded. Does not bind DNA on its own. The protein is Centromere protein S (CENPS) of Bos taurus (Bovine).